The sequence spans 126 residues: Protein ApaG (126 aa).

An ApaG domain is found at 2–126 (SQVESPIKIK…FRLAVPGIFQ (125 aa)).

The protein is Protein ApaG of Shewanella frigidimarina (strain NCIMB 400).